The chain runs to 1146 residues: DNA polymerase II large subunit (1146 aa).

Belongs to the archaeal DNA polymerase II family. As to quaternary structure, heterodimer of a large subunit and a small subunit.

It catalyses the reaction DNA(n) + a 2'-deoxyribonucleoside 5'-triphosphate = DNA(n+1) + diphosphate. The catalysed reaction is Exonucleolytic cleavage in the 3'- to 5'-direction to yield nucleoside 5'-phosphates.. Possesses two activities: a DNA synthesis (polymerase) and an exonucleolytic activity that degrades single-stranded DNA in the 3'- to 5'-direction. Has a template-primer preference which is characteristic of a replicative DNA polymerase. The polypeptide is DNA polymerase II large subunit (Methanosarcina barkeri (strain Fusaro / DSM 804)).